Here is a 364-residue protein sequence, read N- to C-terminus: Peptide chain release factor 1 (364 aa).

An N5-methylglutamine modification is found at Q238.

This sequence belongs to the prokaryotic/mitochondrial release factor family. Methylated by PrmC. Methylation increases the termination efficiency of RF1.

It is found in the cytoplasm. In terms of biological role, peptide chain release factor 1 directs the termination of translation in response to the peptide chain termination codons UAG and UAA. The protein is Peptide chain release factor 1 of Psychrobacter sp. (strain PRwf-1).